A 257-amino-acid chain; its full sequence is (R)-2-haloacid dehalogenase (257 aa).

This sequence belongs to the HAD-like hydrolase superfamily. S-2-haloalkanoic acid dehalogenase family.

It catalyses the reaction an (R)-2-haloacid + H2O = a (2S)-2-hydroxycarboxylate + a halide anion + H(+). Its function is as follows. Catalyzes the hydrolytic dehalogenation of small (R)-2-haloalkanoic acids to yield the corresponding (S)-2-hydroxyalkanoic acids. Acts on acids of short chain lengths, C(2) to C(4), with inversion of configuration at C-2. This Rhizobium sp. (strain NHG3) protein is (R)-2-haloacid dehalogenase (dehI).